Consider the following 399-residue polypeptide: Cell division protein DivIB (399 aa).

Disordered stretches follow at residues 1-23 and 35-119; these read MSKD…SEWQ and EEEA…ATKE. Residues 1–133 are Cytoplasmic-facing; sequence MSKDKKNEDK…AKIPGIHILR (133 aa). Composition is skewed to basic and acidic residues over residues 35–65 and 75–119; these read EEEA…KQDQ and ESAK…ATKE. A helical transmembrane segment spans residues 134–154; it reads AFTILFPSLLLLFVSAYLLSP. Residues 155–399 are Extracellular-facing; sequence YATMKDIRVE…NQTTQRSSRR (245 aa). Positions 156-226 constitute a POTRA domain; it reads ATMKDIRVEG…TKFTIKVKEY (71 aa). The span at 364 to 388 shows a compositional bias: basic and acidic residues; it reads KAKQEAKEAEKKQEEEQKKQEEESN. The interval 364–399 is disordered; it reads KAKQEAKEAEKKQEEEQKKQEEESNRNQTTQRSSRR. A compositionally biased stretch (polar residues) spans 389 to 399; it reads RNQTTQRSSRR.

Belongs to the FtsQ/DivIB family. DivIB subfamily.

It localises to the cell membrane. Its function is as follows. Cell division protein that may be involved in stabilizing or promoting the assembly of the division complex. The chain is Cell division protein DivIB from Streptococcus pneumoniae serotype 4 (strain ATCC BAA-334 / TIGR4).